The sequence spans 425 residues: Serine--tRNA ligase (425 aa).

231–233 contacts L-serine; sequence TAE. ATP is bound at residue 262–264; it reads RSE. Glu-285 is an L-serine binding site. 349-352 is an ATP binding site; sequence EISS. L-serine is bound at residue Ser-385.

Belongs to the class-II aminoacyl-tRNA synthetase family. Type-1 seryl-tRNA synthetase subfamily. In terms of assembly, homodimer. The tRNA molecule binds across the dimer.

Its subcellular location is the cytoplasm. The enzyme catalyses tRNA(Ser) + L-serine + ATP = L-seryl-tRNA(Ser) + AMP + diphosphate + H(+). It carries out the reaction tRNA(Sec) + L-serine + ATP = L-seryl-tRNA(Sec) + AMP + diphosphate + H(+). Its pathway is aminoacyl-tRNA biosynthesis; selenocysteinyl-tRNA(Sec) biosynthesis; L-seryl-tRNA(Sec) from L-serine and tRNA(Sec): step 1/1. In terms of biological role, catalyzes the attachment of serine to tRNA(Ser). Is also able to aminoacylate tRNA(Sec) with serine, to form the misacylated tRNA L-seryl-tRNA(Sec), which will be further converted into selenocysteinyl-tRNA(Sec). The polypeptide is Serine--tRNA ligase (Maricaulis maris (strain MCS10) (Caulobacter maris)).